The primary structure comprises 244 residues: LexA repressor (244 aa).

The segment at 1 to 24 is disordered; the sequence is MSDSSDTTVDGASDGASDGASGAD. Residues 10–24 are compositionally biased toward low complexity; that stretch reads DGASDGASDGASGAD. Positions 58–78 form a DNA-binding region, H-T-H motif; sequence IREIGDAVGLTSTSSVAHQLR. Catalysis depends on for autocatalytic cleavage activity residues S168 and K205.

This sequence belongs to the peptidase S24 family. In terms of assembly, homodimer.

It carries out the reaction Hydrolysis of Ala-|-Gly bond in repressor LexA.. Functionally, represses a number of genes involved in the response to DNA damage (SOS response), including recA and lexA. In the presence of single-stranded DNA, RecA interacts with LexA causing an autocatalytic cleavage which disrupts the DNA-binding part of LexA, leading to derepression of the SOS regulon and eventually DNA repair. This Mycobacterium ulcerans (strain Agy99) protein is LexA repressor.